We begin with the raw amino-acid sequence, 34 residues long: Photosystem II reaction center protein M (34 aa).

The helical transmembrane segment at 7 to 27 (GFVASLLFILVPAIFLIVLYI) threads the bilayer.

This sequence belongs to the PsbM family. In terms of assembly, PSII is composed of 1 copy each of membrane proteins PsbA, PsbB, PsbC, PsbD, PsbE, PsbF, PsbH, PsbI, PsbJ, PsbK, PsbL, PsbM, PsbT, PsbX, PsbY, PsbZ, Psb30/Ycf12, peripheral proteins PsbO, CyanoQ (PsbQ), PsbU, PsbV and a large number of cofactors. It forms dimeric complexes.

The protein localises to the cellular thylakoid membrane. One of the components of the core complex of photosystem II (PSII). PSII is a light-driven water:plastoquinone oxidoreductase that uses light energy to abstract electrons from H(2)O, generating O(2) and a proton gradient subsequently used for ATP formation. It consists of a core antenna complex that captures photons, and an electron transfer chain that converts photonic excitation into a charge separation. This subunit is found at the monomer-monomer interface. The protein is Photosystem II reaction center protein M of Parasynechococcus marenigrum (strain WH8102).